Here is a 177-residue protein sequence, read N- to C-terminus: Acireductone dioxygenase (177 aa).

Positions 97, 99, 103, and 141 each coordinate Fe(2+). Residues His97, His99, Glu103, and His141 each coordinate Ni(2+).

This sequence belongs to the acireductone dioxygenase (ARD) family. Monomer. Fe(2+) is required as a cofactor. The cofactor is Ni(2+).

The catalysed reaction is 1,2-dihydroxy-5-(methylsulfanyl)pent-1-en-3-one + O2 = 3-(methylsulfanyl)propanoate + CO + formate + 2 H(+). It carries out the reaction 1,2-dihydroxy-5-(methylsulfanyl)pent-1-en-3-one + O2 = 4-methylsulfanyl-2-oxobutanoate + formate + 2 H(+). Its pathway is amino-acid biosynthesis; L-methionine biosynthesis via salvage pathway; L-methionine from S-methyl-5-thio-alpha-D-ribose 1-phosphate: step 5/6. In terms of biological role, catalyzes 2 different reactions between oxygen and the acireductone 1,2-dihydroxy-3-keto-5-methylthiopentene (DHK-MTPene) depending upon the metal bound in the active site. Fe-containing acireductone dioxygenase (Fe-ARD) produces formate and 2-keto-4-methylthiobutyrate (KMTB), the alpha-ketoacid precursor of methionine in the methionine recycle pathway. Ni-containing acireductone dioxygenase (Ni-ARD) produces methylthiopropionate, carbon monoxide and formate, and does not lie on the methionine recycle pathway. This chain is Acireductone dioxygenase, found in Leptospira biflexa serovar Patoc (strain Patoc 1 / ATCC 23582 / Paris).